Here is a 137-residue protein sequence, read N- to C-terminus: Nucleoside diphosphate kinase (137 aa).

The ATP site is built by Lys-9, Phe-57, Arg-85, Thr-91, Arg-102, and Asn-112. Residue His-115 is the Pros-phosphohistidine intermediate of the active site.

Belongs to the NDK family. In terms of assembly, homotetramer. The cofactor is Mg(2+).

Its subcellular location is the cytoplasm. It carries out the reaction a 2'-deoxyribonucleoside 5'-diphosphate + ATP = a 2'-deoxyribonucleoside 5'-triphosphate + ADP. It catalyses the reaction a ribonucleoside 5'-diphosphate + ATP = a ribonucleoside 5'-triphosphate + ADP. Major role in the synthesis of nucleoside triphosphates other than ATP. The ATP gamma phosphate is transferred to the NDP beta phosphate via a ping-pong mechanism, using a phosphorylated active-site intermediate. This Campylobacter jejuni subsp. doylei (strain ATCC BAA-1458 / RM4099 / 269.97) protein is Nucleoside diphosphate kinase.